Consider the following 272-residue polypeptide: Putative hydro-lyase RPB_3621 (272 aa).

The protein belongs to the D-glutamate cyclase family.

This Rhodopseudomonas palustris (strain HaA2) protein is Putative hydro-lyase RPB_3621.